Reading from the N-terminus, the 303-residue chain is Protoheme IX farnesyltransferase (303 aa).

7 helical membrane passes run 25 to 45 (MGLV…AIVL), 54 to 74 (IPQI…ACAL), 118 to 138 (LLFA…VGYV), 151 to 171 (WNTV…WTAI), 177 to 197 (LVAV…FYAL), 230 to 250 (LVVL…FIVL), and 280 to 300 (FIYS…ISLI).

Belongs to the UbiA prenyltransferase family. Protoheme IX farnesyltransferase subfamily. In terms of assembly, interacts with CtaA.

Its subcellular location is the cell membrane. The enzyme catalyses heme b + (2E,6E)-farnesyl diphosphate + H2O = Fe(II)-heme o + diphosphate. It functions in the pathway porphyrin-containing compound metabolism; heme O biosynthesis; heme O from protoheme: step 1/1. Its function is as follows. Converts heme B (protoheme IX) to heme O by substitution of the vinyl group on carbon 2 of heme B porphyrin ring with a hydroxyethyl farnesyl side group. The chain is Protoheme IX farnesyltransferase from Staphylococcus saprophyticus subsp. saprophyticus (strain ATCC 15305 / DSM 20229 / NCIMB 8711 / NCTC 7292 / S-41).